We begin with the raw amino-acid sequence, 198 residues long: dTTP/UTP pyrophosphatase (198 aa).

Asp-75 (proton acceptor) is an active-site residue.

The protein belongs to the Maf family. YhdE subfamily. The cofactor is a divalent metal cation.

The protein resides in the cytoplasm. The enzyme catalyses dTTP + H2O = dTMP + diphosphate + H(+). It carries out the reaction UTP + H2O = UMP + diphosphate + H(+). Nucleoside triphosphate pyrophosphatase that hydrolyzes dTTP and UTP. May have a dual role in cell division arrest and in preventing the incorporation of modified nucleotides into cellular nucleic acids. The polypeptide is dTTP/UTP pyrophosphatase (Wolbachia pipientis wMel).